We begin with the raw amino-acid sequence, 292 residues long: 4-hydroxy-tetrahydrodipicolinate synthase 2 (292 aa).

Residue T46 coordinates pyruvate. Y134 functions as the Proton donor/acceptor in the catalytic mechanism. The Schiff-base intermediate with substrate role is filled by K162. V204 provides a ligand contact to pyruvate.

Belongs to the DapA family. In terms of assembly, homotetramer; dimer of dimers.

It is found in the cytoplasm. The enzyme catalyses L-aspartate 4-semialdehyde + pyruvate = (2S,4S)-4-hydroxy-2,3,4,5-tetrahydrodipicolinate + H2O + H(+). It functions in the pathway amino-acid biosynthesis; L-lysine biosynthesis via DAP pathway; (S)-tetrahydrodipicolinate from L-aspartate: step 3/4. Catalyzes the condensation of (S)-aspartate-beta-semialdehyde [(S)-ASA] and pyruvate to 4-hydroxy-tetrahydrodipicolinate (HTPA). The sequence is that of 4-hydroxy-tetrahydrodipicolinate synthase 2 from Halalkalibacterium halodurans (strain ATCC BAA-125 / DSM 18197 / FERM 7344 / JCM 9153 / C-125) (Bacillus halodurans).